Reading from the N-terminus, the 132-residue chain is Fluoride-specific ion channel FluC 1 (132 aa).

The next 4 membrane-spanning stretches (helical) occupy residues 9–29, 35–55, 72–89, and 100–120; these read LAAV…LSAL, ASWP…VGYF, LLGT…TMQV, and WGLA…AVHL. Residues Gly79 and Thr82 each contribute to the Na(+) site.

This sequence belongs to the fluoride channel Fluc/FEX (TC 1.A.43) family.

The protein localises to the cell membrane. The enzyme catalyses fluoride(in) = fluoride(out). With respect to regulation, na(+) is not transported, but it plays an essential structural role and its presence is essential for fluoride channel function. Fluoride-specific ion channel. Important for reducing fluoride concentration in the cell, thus reducing its toxicity. This chain is Fluoride-specific ion channel FluC 1, found in Mycolicibacterium paratuberculosis (strain ATCC BAA-968 / K-10) (Mycobacterium paratuberculosis).